A 190-amino-acid polypeptide reads, in one-letter code: T-cell receptor gamma chain C region 5/10-13 (190 aa).

The c region stretch occupies residues D1–Y157. A helical membrane pass occupies residues T158–F178. Over R179–S190 the chain is Cytoplasmic.

It is found in the membrane. This Mus musculus (Mouse) protein is T-cell receptor gamma chain C region 5/10-13.